A 160-amino-acid chain; its full sequence is Small ribosomal subunit protein uS7 (160 aa).

This sequence belongs to the universal ribosomal protein uS7 family. In terms of assembly, part of the 30S ribosomal subunit. Contacts proteins S9 and S11.

Its function is as follows. One of the primary rRNA binding proteins, it binds directly to 16S rRNA where it nucleates assembly of the head domain of the 30S subunit. Is located at the subunit interface close to the decoding center, probably blocks exit of the E-site tRNA. The chain is Small ribosomal subunit protein uS7 from Rickettsia canadensis (strain McKiel).